A 778-amino-acid chain; its full sequence is Endonuclease MutS2 (778 aa).

ATP is bound at residue 328 to 335 (GPNTGGKT). The region spanning 702 to 777 (LDLRGKRYEE…GSGATIVTFK (76 aa)) is the Smr domain.

The protein belongs to the DNA mismatch repair MutS family. MutS2 subfamily. Homodimer. Binds to stalled ribosomes, contacting rRNA.

Functionally, endonuclease that is involved in the suppression of homologous recombination and thus may have a key role in the control of bacterial genetic diversity. In terms of biological role, acts as a ribosome collision sensor, splitting the ribosome into its 2 subunits. Detects stalled/collided 70S ribosomes which it binds and splits by an ATP-hydrolysis driven conformational change. Acts upstream of the ribosome quality control system (RQC), a ribosome-associated complex that mediates the extraction of incompletely synthesized nascent chains from stalled ribosomes and their subsequent degradation. Probably generates substrates for RQC. The protein is Endonuclease MutS2 of Streptococcus pneumoniae (strain JJA).